Consider the following 528-residue polypeptide: Alpha-amylase (528 aa).

Positions 1–28 (MNKKWLNIPALIALLAAIAFGSVAPAEA) are cleaved as a signal peptide. Ca(2+) is bound by residues N168 and D228. The active-site Nucleophile is the D258. H262 contributes to the Ca(2+) binding site. E286 serves as the catalytic Proton donor.

This sequence belongs to the glycosyl hydrolase 13 family. Monomer. Requires Ca(2+) as cofactor.

It carries out the reaction Endohydrolysis of (1-&gt;4)-alpha-D-glucosidic linkages in polysaccharides containing three or more (1-&gt;4)-alpha-linked D-glucose units.. The chain is Alpha-amylase from Niallia circulans (Bacillus circulans).